We begin with the raw amino-acid sequence, 418 residues long: Alpha-1-antitrypsin (418 aa).

The signal sequence occupies residues 1–24 (MPSSVSWGILLLAGLCCLVPVSLA). Ser38 carries the phosphoserine modification. Asn70, Asn107, and Asn271 each carry an N-linked (GlcNAc...) asparagine glycan. Positions 373 to 392 (GAMFLEAIPMSIPPEVKFNK) are RCL. Ser383 is modified (phosphoserine).

The protein belongs to the serpin family. As to quaternary structure, interacts with CELA2A. Interacts with ERGIC3 and LMAN1/ERGIC53. Interacts with PRSS1/Trypsin. Plasma.

It localises to the secreted. Functionally, inhibitor of serine proteases. Its primary target is elastase, but it also has a moderate affinity for plasmin and thrombin. Inhibits trypsin, chymotrypsin and plasminogen activator. This is Alpha-1-antitrypsin (SERPINA1) from Pongo abelii (Sumatran orangutan).